Consider the following 262-residue polypeptide: Acyl-[acyl-carrier-protein]--UDP-N-acetylglucosamine O-acyltransferase (262 aa).

This sequence belongs to the transferase hexapeptide repeat family. LpxA subfamily. Homotrimer.

Its subcellular location is the cytoplasm. It catalyses the reaction a (3R)-hydroxyacyl-[ACP] + UDP-N-acetyl-alpha-D-glucosamine = a UDP-3-O-[(3R)-3-hydroxyacyl]-N-acetyl-alpha-D-glucosamine + holo-[ACP]. Its pathway is glycolipid biosynthesis; lipid IV(A) biosynthesis; lipid IV(A) from (3R)-3-hydroxytetradecanoyl-[acyl-carrier-protein] and UDP-N-acetyl-alpha-D-glucosamine: step 1/6. Involved in the biosynthesis of lipid A, a phosphorylated glycolipid that anchors the lipopolysaccharide to the outer membrane of the cell. This chain is Acyl-[acyl-carrier-protein]--UDP-N-acetylglucosamine O-acyltransferase, found in Yersinia enterocolitica serotype O:8 / biotype 1B (strain NCTC 13174 / 8081).